The primary structure comprises 911 residues: Protein translocase subunit SecA (911 aa).

ATP is bound by residues Gln87, 105-109 (GEGKT), and Asp510. The Zn(2+) site is built by Cys896, Cys898, Cys907, and His908.

Belongs to the SecA family. Monomer and homodimer. Part of the essential Sec protein translocation apparatus which comprises SecA, SecYEG and auxiliary proteins SecDF-YajC and YidC. It depends on Zn(2+) as a cofactor.

Its subcellular location is the cell inner membrane. It localises to the cytoplasm. It catalyses the reaction ATP + H2O + cellular proteinSide 1 = ADP + phosphate + cellular proteinSide 2.. Its function is as follows. Part of the Sec protein translocase complex. Interacts with the SecYEG preprotein conducting channel. Has a central role in coupling the hydrolysis of ATP to the transfer of proteins into and across the cell membrane, serving both as a receptor for the preprotein-SecB complex and as an ATP-driven molecular motor driving the stepwise translocation of polypeptide chains across the membrane. This Acinetobacter baumannii (strain SDF) protein is Protein translocase subunit SecA.